Consider the following 323-residue polypeptide: Aldo-keto reductase family 1 member C3 (323 aa).

NADP(+) is bound by residues 20 to 24 (GFGTY) and Asp-50. Tyr-55 acts as the Proton donor in catalysis. His-117 provides a ligand contact to substrate. Residues 166–167 (SN), Gln-190, 216–221 (YSALGS), and 270–280 (KSYNEQRIREN) each bind NADP(+).

Belongs to the aldo/keto reductase family.

The protein resides in the cytoplasm. It carries out the reaction a 3alpha-hydroxysteroid + NADP(+) = a 3-oxosteroid + NADPH + H(+). The enzyme catalyses a 3alpha-hydroxysteroid + NAD(+) = a 3-oxosteroid + NADH + H(+). The catalysed reaction is prostaglandin F2alpha + NADP(+) = prostaglandin D2 + NADPH + H(+). It catalyses the reaction testosterone + NAD(+) = androst-4-ene-3,17-dione + NADH + H(+). It carries out the reaction testosterone + NADP(+) = androst-4-ene-3,17-dione + NADPH + H(+). The enzyme catalyses prostaglandin F2alpha + NADP(+) = prostaglandin H2 + NADPH + H(+). The catalysed reaction is prostaglandin D2 + NADPH + H(+) = 11beta-prostaglandin F2 + NADP(+). It catalyses the reaction prostaglandin D2-ethanolamide + NADPH + H(+) = 11beta-prostaglandin F2-ethanolamide + NADP(+). It carries out the reaction 17beta-estradiol + NADP(+) = estrone + NADPH + H(+). The enzyme catalyses 17beta-estradiol + NAD(+) = estrone + NADH + H(+). The catalysed reaction is (20S)-hydroxypregn-4-en-3-one + NADP(+) = progesterone + NADPH + H(+). It catalyses the reaction (20S)-hydroxypregn-4-en-3-one + NAD(+) = progesterone + NADH + H(+). It carries out the reaction 5alpha-androstane-3alpha,17beta-diol + NADP(+) = 17beta-hydroxy-5alpha-androstan-3-one + NADPH + H(+). The enzyme catalyses 5alpha-androstane-3alpha,17beta-diol + NAD(+) = 17beta-hydroxy-5alpha-androstan-3-one + NADH + H(+). The catalysed reaction is androsterone + NADPH + H(+) = 5alpha-androstane-3alpha,17beta-diol + NADP(+). It catalyses the reaction 5alpha-androstane-3alpha,17beta-diol + NAD(+) = androsterone + NADH + H(+). It carries out the reaction 5alpha-androstane-3beta,17beta-diol + NADP(+) = 17beta-hydroxy-5alpha-androstan-3-one + NADPH + H(+). The enzyme catalyses 9-cis-retinol + NADP(+) = 9-cis-retinal + NADPH + H(+). Its pathway is steroid metabolism. Cytosolic aldo-keto reductase that catalyzes the NADH and NADPH-dependent reduction of ketosteroids to hydroxysteroids. Acts as a NAD(P)(H)-dependent 3-, 17- and 20-ketosteroid reductase on the steroid nucleus and side chain and regulates the metabolism of androgens, estrogens and progesterone. Displays the ability to catalyze both oxidation and reduction in vitro, but most probably acts as a reductase in vivo since the oxidase activity measured in vitro is inhibited by physiological concentration of NADPH. Acts preferentially as a 17-ketosteroid reductase and has the highest catalytic efficiency of the AKR1C enzyme for the reduction of delta4-androstenedione to form testosterone. Reduces prostaglandin (PG) D2 to 11beta-prostaglandin F2, progesterone to 20alpha-hydroxyprogesterone and estrone to 17beta-estradiol. Catalyzes the transformation of the potent androgen dihydrotestosterone (DHT) into the less active form, 5-alpha-androstan-3-alpha,17-beta-diol (3-alpha-diol). Also displays retinaldehyde reductase activity toward 9-cis-retinal. The chain is Aldo-keto reductase family 1 member C3 (AKR1C3) from Pongo abelii (Sumatran orangutan).